Here is a 158-residue protein sequence, read N- to C-terminus: Transcriptional regulator MraZ (158 aa).

2 SpoVT-AbrB domains span residues 7-57 (THQN…PTAA) and 86-129 (AYPV…EPAA). The tract at residues 133–158 (RRAEARTRSRQLALPAQGRRQGGADA) is disordered.

The protein belongs to the MraZ family. As to quaternary structure, forms oligomers.

The protein localises to the cytoplasm. It localises to the nucleoid. This chain is Transcriptional regulator MraZ, found in Gluconacetobacter diazotrophicus (strain ATCC 49037 / DSM 5601 / CCUG 37298 / CIP 103539 / LMG 7603 / PAl5).